The sequence spans 78 residues: UPF0349 protein BPUM_2879 (78 aa).

It belongs to the UPF0349 family.

In Bacillus pumilus (strain SAFR-032), this protein is UPF0349 protein BPUM_2879.